The chain runs to 92 residues: Long neurotoxin 3FTx-Oxy2 (92 aa).

The first 21 residues, 1-21 (MKTLLLTLVVVTIVCLDLGYT), serve as a signal peptide directing secretion. 4 disulfides stabilise this stretch: Cys24/Cys42, Cys35/Cys63, Cys67/Cys79, and Cys80/Cys85.

This sequence belongs to the three-finger toxin family. Long-chain subfamily. Type II alpha-neurotoxin sub-subfamily. As to expression, expressed by the venom gland.

The protein resides in the secreted. Binds with high affinity to muscular (alpha-1/CHRNA1) and neuronal (alpha-7/CHRNA7) nicotinic acetylcholine receptor (nAChR) and inhibits acetylcholine from binding to the receptor, thereby impairing neuromuscular and neuronal transmission. This chain is Long neurotoxin 3FTx-Oxy2, found in Oxyuranus microlepidotus (Inland taipan).